The following is a 355-amino-acid chain: Protein ECERIFERUM 16 (355 aa).

Disordered stretches follow at residues 1–60 (MDSK…LPSN) and 296–315 (HSSTEQFNKPGNPSDQKIHM). Basic residues predominate over residues 7 to 28 (AKSKRAHTLHHSKKSHSVHKPK). Composition is skewed to polar residues over residues 41 to 53 (QGNQTKSPVQSRR) and 296 to 310 (HSSTEQFNKPGNPSD).

As to quaternary structure, interacts with RST1. In terms of tissue distribution, expressed in taproots, lateral roots, root tips, leaf veins, cauline leaves, inflorescences, flowers, and siliques.

It is found in the cytoplasm. Its subcellular location is the cytosol. It localises to the endoplasmic reticulum. Together with RST1, acts as a cofactor of the cytoplasmic exosome and connects the cytosolic RNA exosome to the SKI complex. Acts as a post-transcriptional gene silencing (PTGS) suppressor. CER16/RIPR can, like RST1 suppress the production of small interfering RNAs (siRNAs) from the CER3 locus, which is involved in cuticule membrane and wax production, and in the typhine and sporopollenin biosynthesis of pollen. This chain is Protein ECERIFERUM 16, found in Arabidopsis thaliana (Mouse-ear cress).